The sequence spans 925 residues: Proto-oncogene DBL (925 aa).

Residues 1 to 88 form the CRAL-TRIO domain; that stretch reads MAEANPRRGK…ELGGTLQYCH (88 aa). Residues 221–322 form a Spectrin repeat; the sequence is WKFEQDFQQL…EIKAKRIQLS (102 aa). Residues 495–675 enclose the DH domain; the sequence is LKNHVLNELI…LDLLKSVNDS (181 aa). The PH domain occupies 687 to 809; sequence NLNELGKMIM…WLKEIRNILL (123 aa).

The protein belongs to the MCF2 family. In terms of assembly, interacts with an array of inositol phospholipids such as phosphatidylinositol 3-phosphate (PI3P), phosphatidylinositol 4-phosphate (PI4P) and phosphatidylinositol 5-phosphate (PI5P). May interact with CCPG1. Phosphorylation by TNK2 enhances guanine nucleotide exchange factor (GEF) activity toward Rho family proteins. Isoform 1 is expressed only in brain. Isoform 3 is expressed in heart, kidney, spleen, liver and testis. Isoform 4 is expressed in brain, heart, kidney, testis, placenta, stomach and peripheral blood. The protein is detectable in brain, heart, kidney, intestine, muscle, lung and testis.

Its subcellular location is the cytoplasm. It localises to the membrane. Its function is as follows. Guanine nucleotide exchange factor (GEF) that modulates the Rho family of GTPases. Promotes the conversion of some member of the Rho family GTPase from the GDP-bound to the GTP-bound form. Isoform 1 exhibits no activity toward RHOA, RAC1 or CDC42. Isoform 2 exhibits decreased GEF activity toward CDC42. Isoform 3 exhibits a weak but significant activity toward RAC1 and CDC42. Isoform 4 exhibits significant activity toward RHOA and CDC42. The truncated DBL oncogene is active toward RHOA, RAC1 and CDC42. The protein is Proto-oncogene DBL (MCF2) of Homo sapiens (Human).